Here is a 514-residue protein sequence, read N- to C-terminus: CENP-B homolog protein 2 (514 aa).

The 76-residue stretch at 70-145 (QIRRNRQGKY…KKRCLKHGLK (76 aa)) folds into the HTH CENPB-type domain. Positions 172-384 (FDPKDIFNMD…FEPSIIYNCF (213 aa)) constitute a DDE-1 domain.

The protein localises to the nucleus. It localises to the chromosome. Its subcellular location is the centromere. In terms of biological role, binds to the central core and core-associated repeat regions of centromeric heterochromatin. In Schizosaccharomyces pombe (strain 972 / ATCC 24843) (Fission yeast), this protein is CENP-B homolog protein 2 (cbh2).